A 251-amino-acid polypeptide reads, in one-letter code: Flap endonuclease Xni (251 aa).

D104 provides a ligand contact to Mg(2+). Residues 160 to 249 (VQPQQLPDYW…IDGNLQQLRL (90 aa)) form the 5'-3' exonuclease domain. K(+)-binding residues include L171, A172, P180, V182, and I185. The tract at residues 184 to 189 (GIGPKS) is interaction with DNA.

It belongs to the Xni family. Mg(2+) serves as cofactor. K(+) is required as a cofactor.

In terms of biological role, has flap endonuclease activity. During DNA replication, flap endonucleases cleave the 5'-overhanging flap structure that is generated by displacement synthesis when DNA polymerase encounters the 5'-end of a downstream Okazaki fragment. The sequence is that of Flap endonuclease Xni from Escherichia coli O81 (strain ED1a).